The primary structure comprises 264 residues: MKYMITSKGDEKSDLLRLNMIAGFGEYDMEYDDVEPEIVISIGGDGTFLSAFHQYEERLDEIAFIGIHTGHLGFYADWRPAEADKLVKLLAKGEYQKVSYPLLKTTVKYGIGKKEATYLALNESTVKSSGGPFVVDVVINDIHFERFRGDGLCMSTPSGTTAYNKSLGGALMHPSIEAMQLTEMASINNRVYRTIGSPLVFPKHHVVSLQPVNDKDFQISVDHLSILHRDVQEIRYEVSAKKIHFARFRSFPFWRRVHDSFIED.

The active-site Proton acceptor is aspartate 45. NAD(+) is bound by residues 45–46 (DG), glycine 46, 122–123 (NE), arginine 148, aspartate 150, serine 158, 161–166 (TAYNKS), and histidine 223.

Belongs to the NAD kinase family. Homotetramer. A divalent metal cation is required as a cofactor.

The protein localises to the cytoplasm. The catalysed reaction is NAD(+) + ATP = ADP + NADP(+) + H(+). Its activity is regulated as follows. Competitively inhibited by 5'-thioacetyladenosine (TAA) and di-(5'-thioadenosine) (DTA). Involved in the regulation of the intracellular balance of NAD and NADP, and is a key enzyme in the biosynthesis of NADP. Catalyzes specifically the phosphorylation on 2'-hydroxyl of the adenosine moiety of NAD to yield NADP. In Listeria monocytogenes serovar 1/2a (strain ATCC BAA-679 / EGD-e), this protein is NAD kinase 1.